Here is a 213-residue protein sequence, read N- to C-terminus: Cell division protein SepF 2 (213 aa).

Positions 16–89 are disordered; it reads EDDGYDGRGF…ASLAAESSRP (74 aa). The segment covering 27-39 has biased composition (acidic residues); it reads PDDDFEPELDPEP.

This sequence belongs to the SepF family. As to quaternary structure, homodimer. Interacts with FtsZ.

It is found in the cytoplasm. Its function is as follows. Cell division protein that is part of the divisome complex and is recruited early to the Z-ring. Probably stimulates Z-ring formation, perhaps through the cross-linking of FtsZ protofilaments. Its function overlaps with FtsA. This chain is Cell division protein SepF 2, found in Streptomyces coelicolor (strain ATCC BAA-471 / A3(2) / M145).